Reading from the N-terminus, the 407-residue chain is Argininosuccinate synthase (407 aa).

ATP contacts are provided by residues 11–19 and A39; that span reads AYSGGLDTS. Residues Y90 and S95 each contribute to the L-citrulline site. G120 is an ATP binding site. Positions 122, 126, and 127 each coordinate L-aspartate. Residue N126 coordinates L-citrulline. Positions 130, 179, 188, 264, and 276 each coordinate L-citrulline.

Belongs to the argininosuccinate synthase family. Type 1 subfamily. As to quaternary structure, homotetramer.

The protein localises to the cytoplasm. It catalyses the reaction L-citrulline + L-aspartate + ATP = 2-(N(omega)-L-arginino)succinate + AMP + diphosphate + H(+). It participates in amino-acid biosynthesis; L-arginine biosynthesis; L-arginine from L-ornithine and carbamoyl phosphate: step 2/3. The sequence is that of Argininosuccinate synthase from Roseiflexus sp. (strain RS-1).